We begin with the raw amino-acid sequence, 387 residues long: 3-ketoacyl-CoA thiolase (387 aa).

The active-site Acyl-thioester intermediate is the cysteine 91. Active-site proton acceptor residues include histidine 343 and cysteine 373.

The protein belongs to the thiolase-like superfamily. Thiolase family. In terms of assembly, heterotetramer of two alpha chains (FadB) and two beta chains (FadA).

It localises to the cytoplasm. The enzyme catalyses an acyl-CoA + acetyl-CoA = a 3-oxoacyl-CoA + CoA. The protein operates within lipid metabolism; fatty acid beta-oxidation. Its function is as follows. Catalyzes the final step of fatty acid oxidation in which acetyl-CoA is released and the CoA ester of a fatty acid two carbons shorter is formed. The chain is 3-ketoacyl-CoA thiolase from Shewanella sp. (strain MR-4).